A 462-amino-acid chain; its full sequence is 3-isopropylmalate dehydratase large subunit (462 aa).

[4Fe-4S] cluster is bound by residues C337, C397, and C400.

Belongs to the aconitase/IPM isomerase family. LeuC type 1 subfamily. In terms of assembly, heterodimer of LeuC and LeuD. [4Fe-4S] cluster is required as a cofactor.

The enzyme catalyses (2R,3S)-3-isopropylmalate = (2S)-2-isopropylmalate. The protein operates within amino-acid biosynthesis; L-leucine biosynthesis; L-leucine from 3-methyl-2-oxobutanoate: step 2/4. In terms of biological role, catalyzes the isomerization between 2-isopropylmalate and 3-isopropylmalate, via the formation of 2-isopropylmaleate. This chain is 3-isopropylmalate dehydratase large subunit, found in Listeria monocytogenes serovar 1/2a (strain ATCC BAA-679 / EGD-e).